The chain runs to 446 residues: Glucose transporter GlcP (446 aa).

Over 1-6 (MKANKY) the chain is Cytoplasmic. The helical transmembrane segment at 7–31 (LIFILGALGGLLYGYDNGVISGALL) threads the bilayer. The Extracellular portion of the chain corresponds to 32 to 38 (FIHKDIP). A helical membrane pass occupies residues 39 to 64 (LNSTTEGIVVSSMLIGAIVGAGSSGP). The Cytoplasmic segment spans residues 65 to 70 (LADKLG). The helical transmembrane segment at 71-90 (RRRLVMLIAIVFIIGALILA) threads the bilayer. Over 91–94 (ASTN) the chain is Extracellular. A helical transmembrane segment spans residues 95 to 122 (LALLIIGRLIIGLAVGGSMSTVPVYLSE). Topologically, residues 123 to 129 (MAPTEYR) are cytoplasmic. Residues 130 to 152 (GSLGSLNQLMITIGILAAYLVNY) form a helical membrane-spanning segment. Topologically, residues 153 to 154 (AF) are extracellular. Residues 155–180 (ADIEGWRWMLGLAVVPSVILLVGIYF) traverse the membrane as a helical segment. Over 181–234 (MPESPRWLLENRNEEAARQVMKITYDDSEIDKELKEMKEINAISESTWTVIKSP) the chain is Cytoplasmic. The chain crosses the membrane as a helical span at residues 235–269 (WLGRILIVGCIFAIFQQFIGINAVIFYSSSIFAKA). Residues 270-272 (GLG) lie on the Extracellular side of the membrane. Residues 273–295 (EAASILGSVGIGTINVLVTIVAI) form a helical membrane-spanning segment. The Cytoplasmic segment spans residues 296–303 (FVVDKIDR). Residues 304 to 324 (KKLLVGGNIGMIASLLIMAIL) traverse the membrane as a helical segment. The Extracellular segment spans residues 325–329 (IWTIG). A helical membrane pass occupies residues 330 to 363 (IASSAWIIIVCLSLFIVFFGISWGPVLWVMLPEL). Residues 364 to 370 (FPMRARG) lie on the Cytoplasmic side of the membrane. Residues 371–399 (AATGISALVLNIGTLIVSLFFPILSDALS) traverse the membrane as a helical segment. The Extracellular segment spans residues 400 to 401 (TE). Residues 402–420 (WVFLIFAFIGVLAMIFVIK) traverse the membrane as a helical segment. Residues 421–446 (FLPETRGRSLEEIEYELRERTGARTE) are Cytoplasmic-facing.

The protein belongs to the major facilitator superfamily. Sugar transporter (TC 2.A.1.1) family.

It is found in the cell membrane. Inhibited by carbonyl cyanide m-chlorophenylhydrazone (CCCP) and by the human glucose transport inhibitors cytochalasin B, phloretin, and forskolin. In terms of biological role, transporter highly specific for glucose uptake. The protein is Glucose transporter GlcP of Staphylococcus epidermidis (strain ATCC 12228 / FDA PCI 1200).